An 898-amino-acid polypeptide reads, in one-letter code: Phosphoenolpyruvate carboxylase (898 aa).

Catalysis depends on residues His-138 and Lys-561.

The protein belongs to the PEPCase type 1 family. Mg(2+) is required as a cofactor.

It carries out the reaction oxaloacetate + phosphate = phosphoenolpyruvate + hydrogencarbonate. In terms of biological role, forms oxaloacetate, a four-carbon dicarboxylic acid source for the tricarboxylic acid cycle. In Streptococcus pneumoniae serotype 2 (strain D39 / NCTC 7466), this protein is Phosphoenolpyruvate carboxylase.